The chain runs to 103 residues: Small ribosomal subunit protein uS10 (103 aa).

This sequence belongs to the universal ribosomal protein uS10 family. As to quaternary structure, part of the 30S ribosomal subunit.

In terms of biological role, involved in the binding of tRNA to the ribosomes. This chain is Small ribosomal subunit protein uS10, found in Polynucleobacter asymbioticus (strain DSM 18221 / CIP 109841 / QLW-P1DMWA-1) (Polynucleobacter necessarius subsp. asymbioticus).